We begin with the raw amino-acid sequence, 350 residues long: Protein RecA (350 aa).

Residue 68 to 75 (GPESSGKT) coordinates ATP.

It belongs to the RecA family.

The protein resides in the cytoplasm. Can catalyze the hydrolysis of ATP in the presence of single-stranded DNA, the ATP-dependent uptake of single-stranded DNA by duplex DNA, and the ATP-dependent hybridization of homologous single-stranded DNAs. It interacts with LexA causing its activation and leading to its autocatalytic cleavage. The sequence is that of Protein RecA from Symbiobacterium thermophilum (strain DSM 24528 / JCM 14929 / IAM 14863 / T).